The sequence spans 210 residues: Fibroblast growth factor 21 (210 aa).

The first 28 residues, 1–28, serve as a signal peptide directing secretion; the sequence is MEWMRSRVGTLGLWVRLLLAVFLLGVYQ. Residues 144–210 form a disordered region; that stretch reads PLRLPQKDSP…LQGRSPSYAS (67 aa).

This sequence belongs to the heparin-binding growth factors family. Interacts (via C-terminus) with KLB; this interaction is direct. Interacts with FGFR4. In terms of tissue distribution, most abundantly expressed in the liver, also expressed in the thymus at lower levels. Expressed in skeletal muscle (at protein level). Secreted in plasma (at protein level).

The protein resides in the secreted. Functionally, stimulates glucose uptake in differentiated adipocytes via the induction of glucose transporter SLC2A1/GLUT1 expression (but not SLC2A4/GLUT4 expression). Activity probably requires the presence of KLB. Regulates systemic glucose homeostasis and insulin sensitivity. The sequence is that of Fibroblast growth factor 21 (Fgf21) from Mus musculus (Mouse).